Consider the following 430-residue polypeptide: Tol-Pal system protein TolB (430 aa).

An N-terminal signal peptide occupies residues M1–A21.

Belongs to the TolB family. The Tol-Pal system is composed of five core proteins: the inner membrane proteins TolA, TolQ and TolR, the periplasmic protein TolB and the outer membrane protein Pal. They form a network linking the inner and outer membranes and the peptidoglycan layer.

Its subcellular location is the periplasm. Part of the Tol-Pal system, which plays a role in outer membrane invagination during cell division and is important for maintaining outer membrane integrity. TolB occupies a key intermediary position in the Tol-Pal system because it communicates directly with both membrane-embedded components, Pal in the outer membrane and TolA in the inner membrane. This Shigella flexneri protein is Tol-Pal system protein TolB.